We begin with the raw amino-acid sequence, 304 residues long: MRLPIFLDTDPGIDDAVAIAAAIFAPELDLQLMTTVAGNVSVEKTTRNALQLLHFWNAEIPLAQGAAVPLVRAPRNAASVHGESGMAGYDFVEHNRSPLDKPAFLAIRDALMRAPEPVTLVAIGPLTNIALLLSQCPECKQYIRRLVIMGGSAGRGNCTPNAEFNIAADPEAAACVFRSGIEIVMCGLDVTNQAILTPDYLATLPELNRTGKMLHALFSHYRSGSMQSGLRMHDLCAIAWLVRPDLFTLKPCFVAVETQGEFTSGTTVVDIDGCLSKPANVQVALDLDVKGFQQWVAEVLALAS.

The active site involves H233.

The protein belongs to the IUNH family. RihC subfamily.

Its function is as follows. Hydrolyzes both purine and pyrimidine ribonucleosides with a broad-substrate specificity. The chain is Non-specific ribonucleoside hydrolase RihC from Escherichia coli (strain SMS-3-5 / SECEC).